The following is a 356-amino-acid chain: Mannonate dehydratase (356 aa).

This sequence belongs to the mannonate dehydratase family. The cofactor is Fe(2+). It depends on Mn(2+) as a cofactor.

The catalysed reaction is D-mannonate = 2-dehydro-3-deoxy-D-gluconate + H2O. The protein operates within carbohydrate metabolism; pentose and glucuronate interconversion. Its function is as follows. Catalyzes the dehydration of D-mannonate. The protein is Mannonate dehydratase of Levilactobacillus brevis (strain ATCC 367 / BCRC 12310 / CIP 105137 / JCM 1170 / LMG 11437 / NCIMB 947 / NCTC 947) (Lactobacillus brevis).